Reading from the N-terminus, the 169-residue chain is MEVERPADKQGNREKTVGFKLPDGTIRVTDKGFDYNVGRLNYKPNLDLYPEKLAHAFAKVEMKGGEFKHDFELLAKHMAEMKQTLSPEGKKLTAEQMLQVRDSLTKNFKFAAGVLSAESKDLLKSKTGTVWLSDDTLIKQFNSRDGQDFGIDEYERCQISSMLPSIYYK.

This is an uncharacterized protein from Haemophilus influenzae (strain ATCC 51907 / DSM 11121 / KW20 / Rd).